Here is a 644-residue protein sequence, read N- to C-terminus: Pentatricopeptide repeat-containing protein At1g12775, mitochondrial (644 aa).

The transit peptide at 1–53 directs the protein to the mitochondrion; the sequence is MVRMMIRRLSSQASRFVQPRLLETGTLRIALINCPNELLFCCERGFSTFSDRN. PPR repeat units lie at residues 87–121, 122–156, 157–191, 192–226, 227–261, 262–296, 297–331, 332–366, 367–401, 402–436, 437–471, 472–506, 507–541, 542–576, and 577–611; these read TVID…GIAH, SIYT…GYEP, DTVI…GHKP, TLIT…GFQP, NEVT…NIKL, DAVK…GFKA, DIIT…KISP, NVVT…GIAP, NTIT…GCDP, DIMT…GVIA, NTVT…RVRP, DIVS…KMEL, DIGI…GVKL, DARA…GHAP, and DELT…GFPA.

Belongs to the PPR family. P subfamily.

The protein localises to the mitochondrion. This chain is Pentatricopeptide repeat-containing protein At1g12775, mitochondrial, found in Arabidopsis thaliana (Mouse-ear cress).